A 294-amino-acid chain; its full sequence is Probable endonuclease 4 (294 aa).

9 residues coordinate Zn(2+): His-71, His-111, Glu-148, Asp-182, His-185, His-217, Asp-230, His-232, and Glu-262.

It belongs to the AP endonuclease 2 family. The cofactor is Zn(2+).

The catalysed reaction is Endonucleolytic cleavage to 5'-phosphooligonucleotide end-products.. Functionally, endonuclease IV plays a role in DNA repair. It cleaves phosphodiester bonds at apurinic or apyrimidinic (AP) sites, generating a 3'-hydroxyl group and a 5'-terminal sugar phosphate. The chain is Probable endonuclease 4 from Acholeplasma laidlawii (strain PG-8A).